Reading from the N-terminus, the 370-residue chain is Acyl-CoA:lysophosphatidylglycerol acyltransferase 1 (370 aa).

The chain crosses the membrane as a helical span at residues 22-42 (FAFMVANNLVAIPSYICYVII). The HXXXXD motif motif lies at 101–106 (HQATGD). Residues 342-362 (MWIFLIQSFAFLSGYLWYHII) traverse the membrane as a helical segment.

It belongs to the 1-acyl-sn-glycerol-3-phosphate acyltransferase family. As to expression, ubiquitous. Expressed in heart, kidney, liver, skin, intestine, and thymus. Highest expression is detected in brain and testis.

It is found in the endoplasmic reticulum membrane. The catalysed reaction is a 2-acyl-sn-glycero-3-phosphoethanolamine + octadecanoyl-CoA = 1-octadecanoyl-2-acyl-sn-glycero-3-phosphoethanolamine + CoA. It catalyses the reaction 2-(9Z-octadecenoyl)-sn-glycero-3-phosphoethanolamine + octadecanoyl-CoA = 1-octadecanoyl-2-(9Z-octadecenoyl)-sn-glycero-3-phosphoethanolamine + CoA. The enzyme catalyses a 2-acyl-sn-glycero-3-phosphoethanolamine + hexadecanoyl-CoA = 1-hexadecanoyl-2-acyl-sn-glycero-3-phosphoethanolamine + CoA. It carries out the reaction 2-(9Z-octadecenoyl)-sn-glycero-3-phosphoethanolamine + hexadecanoyl-CoA = 1-hexadecanoyl-2-(9Z-octadecenoyl)-sn-glycero-3-phosphoethanolamine + CoA. The catalysed reaction is 1-tetradecanoyl-sn-glycero-3-phospho-(1'-sn-glycerol) + hexadecanoyl-CoA = 1-tetradecanoyl-2-hexadecanoyl-sn-glycero-3-phospho-(1'-sn-glycerol) + CoA. It catalyses the reaction 1-hexadecanoyl-sn-glycero-3-phospho-(1'-sn-glycerol) + dodecanoyl-CoA = 1-hexadecanoyl-2-dodecanoyl-sn-glycero-3-phospho-(1'-sn-glycerol) + CoA. The enzyme catalyses 1-hexadecanoyl-sn-glycero-3-phospho-(1'-sn-glycerol) + hexadecanoyl-CoA = 1,2-dihexadecanoyl-sn-glycero-3-phospho-(1'-sn-glycerol) + CoA. It carries out the reaction 1-hexadecanoyl-sn-glycero-3-phospho-(1'-sn-glycerol) + octadecanoyl-CoA = 1-hexadecanoyl-2-octadecanoyl-sn-glycero-3-phospho-(1'-sn-glycerol) + CoA. The catalysed reaction is 1-octadecanoyl-sn-glycero-3-phospho-(1'-sn-glycerol) + hexadecanoyl-CoA = 1-octadecanoyl-2-hexadecanoyl-sn-glycero-3-phospho-(1'-sn-glycerol) + CoA. It catalyses the reaction 1-(9Z-octadecenoyl)-sn-glycero-3-phospho-(1'-sn-glycerol) + dodecanoyl-CoA = 1-(9Z-octadecenoyl)-2-dodecanoyl-sn-glycero-3-phospho-(1'-sn-glycerol) + CoA. The enzyme catalyses 1-hexadecanoyl-sn-glycero-3-phospho-(1'-sn-glycerol) + (9Z)-octadecenoyl-CoA = 1-hexadecanoyl-2-(9Z-octadecenoyl)-sn-glycero-3-phospho-(1'-sn-glycerol) + CoA. It carries out the reaction 1-(9Z-octadecenoyl)-sn-glycero-3-phospho-(1'-sn-glycerol) + hexadecanoyl-CoA = 1-(9Z-octadecenoyl)-2-hexadecanoyl-sn-glycero-3-phospho-(1'-sn-glycerol) + CoA. The catalysed reaction is 1-(9Z-octadecenoyl)-sn-glycero-3-phospho-(1'-sn-glycerol) + (9Z)-octadecenoyl-CoA = 1,2-di-(9Z-octadecenoyl)-sn-glycero-3-phospho-(1'-sn-glycerol) + CoA. It catalyses the reaction a 2-acylglycerol + an acyl-CoA = a 1,2-diacylglycerol + CoA. The enzyme catalyses a 2-acylglycerol + hexadecanoyl-CoA = a 1-hexadecanoyl-2-acylglycerol + CoA. It carries out the reaction a 1-acylglycerol + hexadecanoyl-CoA = an hexadecanoyl-acylglycerol + CoA. The catalysed reaction is a 2-acyl-sn-glycero-3-phosphocholine + an acyl-CoA = a 1,2-diacyl-sn-glycero-3-phosphocholine + CoA. It catalyses the reaction 2-(9Z-octadecenoyl)-sn-glycero-3-phosphocholine + octadecanoyl-CoA = 1-octadecanoyl-2-(9Z-octadecenoyl)-sn-glycero-3-phosphocholine + CoA. The enzyme catalyses 2-(9Z,12Z-octadecadienoyl)-sn-glycero-3-phosphocholine + octadecanoyl-CoA = 1-octadecanoyl-2-(9Z,12Z)-octadecadienoyl-sn-glycero-3-phosphocholine + CoA. It carries out the reaction 2-(5Z,8Z,11Z,14Z)-eicosatetraenoyl-sn-glycero-3-phosphocholine + octadecanoyl-CoA = 1-octadecanoyl-2-(5Z,8Z,11Z,14Z-eicosatetraenoyl)-sn-glycero-3-phosphocholine + CoA. The catalysed reaction is 2-(9Z-octadecenoyl)-sn-glycero-3-phosphocholine + hexadecanoyl-CoA = 1-hexadecanoyl-2-(9Z-octadecenoyl)-sn-glycero-3-phosphocholine + CoA. It catalyses the reaction 2-(9Z-octadecenoyl)-sn-glycero-3-phospho-L-serine + hexadecanoyl-CoA = 1-hexadecanoyl-2-(9Z-octadecenoyl)-sn-glycero-3-phospho-L-serine + CoA. The enzyme catalyses 2-(4Z,7Z,10Z,13Z,16Z,19Z-docosahexaenoyl)-sn-glycero-3-phosphocholine + octadecanoyl-CoA = 1-octadecanoyl-2-(4Z,7Z,10Z,13Z,16Z,19Z-docosahexaenoyl)-sn-glycero-3-phosphocholine + CoA. It carries out the reaction 1-(9Z-octadecenoyl)-sn-glycero-3-phospho-L-serine + octadecanoyl-CoA = 1-(9Z-octadecenoyl)-2-octadecanoyl-sn-glycero-3-phospho-L-serine + CoA. The catalysed reaction is a 2-acyl-sn-glycero-3-phosphoethanolamine + a fatty acyl-CoA = a 1,2-diacyl-sn-glycero-3-phosphoethanolamine + CoA. Lysophospholipid acyltransferase involved in fatty acyl chain remodeling of glycerophospholipids in the endoplasmic reticulum membrane. Selectively catalyzes the transfer and esterification of saturated long-chain fatty acids from acyl-CoA to the sn-1 position of 1-lyso-2-acyl phosphatidylethanolamines (1-lyso-PE, LPE), with a preference for stearoyl CoA over palmitoyl CoA as acyl donor. Acts in concert with an unknown phospholipase A1 to convert palmitate PE species into stearate ones. Provides substrates to the PE methylation pathway, controlling stearate/palmitate composition of PE and phosphatidylcholine (PC) species with an overall impact on de novo hepatic lipid synthesis, body fat content and life span. Can acylate lysophosphatidylglycerols (LPG) using various saturated fatty acyl-CoAs as acyl donors. Can also acylate monoacylglycerols with a preference for 2-monoacylglycerols over 1-monoacylglycerols. Has no activity toward lysophosphatidic acids (LPA) and lysophosphatidylcholines (LPC). This is Acyl-CoA:lysophosphatidylglycerol acyltransferase 1 from Mus musculus (Mouse).